Consider the following 166-residue polypeptide: Large ribosomal subunit protein uL10 (166 aa).

This sequence belongs to the universal ribosomal protein uL10 family. Part of the ribosomal stalk of the 50S ribosomal subunit. The N-terminus interacts with L11 and the large rRNA to form the base of the stalk. The C-terminus forms an elongated spine to which L12 dimers bind in a sequential fashion forming a multimeric L10(L12)X complex.

Its function is as follows. Forms part of the ribosomal stalk, playing a central role in the interaction of the ribosome with GTP-bound translation factors. The polypeptide is Large ribosomal subunit protein uL10 (Azotobacter vinelandii (strain DJ / ATCC BAA-1303)).